The following is a 118-amino-acid chain: Ferredoxin-thioredoxin reductase, catalytic chain (118 aa).

Cys56 contributes to the [4Fe-4S] cluster binding site. The active-site Nucleophile is the Cys58. A disulfide bridge connects residues Cys58 and Cys88. [4Fe-4S] cluster contacts are provided by Cys75, Cys77, and Cys86.

The protein belongs to the ferredoxin thioredoxin reductase beta subunit family. Heterodimer of subunit A (variable subunit) and subunit B (catalytic subunit). Heterodimeric FTR forms a complex with ferredoxin and thioredoxin. [4Fe-4S] cluster is required as a cofactor.

It carries out the reaction [thioredoxin]-disulfide + 2 reduced [2Fe-2S]-[ferredoxin] + 2 H(+) = [thioredoxin]-dithiol + 2 oxidized [2Fe-2S]-[ferredoxin]. Catalytic subunit of the ferredoxin-thioredoxin reductase (FTR), which catalyzes the two-electron reduction of thioredoxins by the electrons provided by reduced ferredoxin. The sequence is that of Ferredoxin-thioredoxin reductase, catalytic chain from Synechocystis sp. (strain ATCC 27184 / PCC 6803 / Kazusa).